We begin with the raw amino-acid sequence, 311 residues long: DNA replication terminus site-binding protein (311 aa).

The protein belongs to the Tus family.

It localises to the cytoplasm. Functionally, trans-acting protein required for termination of DNA replication. Binds to DNA replication terminator sequences (terA to terF) to prevent the passage of replication forks. The termination efficiency will be affected by the affinity of this protein for the terminator sequence. The sequence is that of DNA replication terminus site-binding protein from Yersinia pseudotuberculosis serotype O:1b (strain IP 31758).